We begin with the raw amino-acid sequence, 428 residues long: tRNA(Ile2) 2-agmatinylcytidine synthetase TiaS (428 aa).

It belongs to the TiaS family.

The protein localises to the cytoplasm. It catalyses the reaction cytidine(34) in tRNA(Ile2) + agmatine + ATP + H2O = 2-agmatinylcytidine(34) in tRNA(Ile2) + AMP + 2 phosphate + 2 H(+). ATP-dependent agmatine transferase that catalyzes the formation of 2-agmatinylcytidine (agm2C) at the wobble position (C34) of tRNA(Ile2), converting the codon specificity from AUG to AUA. This is tRNA(Ile2) 2-agmatinylcytidine synthetase TiaS from Methanosarcina acetivorans (strain ATCC 35395 / DSM 2834 / JCM 12185 / C2A).